Consider the following 105-residue polypeptide: Putative toxin MazF8 (105 aa).

Forms a complex with cognate antitoxin MazE8.

Putative toxic component of a type II toxin-antitoxin (TA) system. Acts as an endoribonuclease. Neutralized by coexpression with cognate antitoxin MazE8. The chain is Putative toxin MazF8 (mazF8) from Mycobacterium tuberculosis (strain CDC 1551 / Oshkosh).